A 1167-amino-acid polypeptide reads, in one-letter code: Phenyloxazoline synthase MbtB (1167 aa).

In terms of domain architecture, Carrier 1 spans 2–78 (EAVVTSSQTV…AWTRLVGERT (77 aa)). Serine 39 carries the O-(pantetheine 4'-phosphoryl)serine modification. Residues 78-100 (TAESPGAATQSGDTAASAGDPDA) are disordered. Residues 98-390 (PDAPFPLAPI…SSLMLDVDFT (293 aa)) form a condensation/cyclization region. Residues 575–967 (TYAELRERVL…RIAGVEAAVA (393 aa)) form an adenylation region. Positions 1054-1130 (VPSTALERAL…ALARRLVDHE (77 aa)) constitute a Carrier 2 domain. Position 1089 is an O-(pantetheine 4'-phosphoryl)serine (serine 1089).

The protein belongs to the ATP-dependent AMP-binding enzyme family. MbtB subfamily. The cofactor is pantetheine 4'-phosphate. In terms of processing, 4'-phosphopantetheine is transferred from CoA to a specific serine in each of the two carrier protein domains, leading to their activation from apo to holo forms.

Its pathway is siderophore biosynthesis; mycobactin biosynthesis. In terms of biological role, involved in the initial steps of the mycobactin biosynthetic pathway. Putatively couples activated salicylic acid with serine or threonine and cyclizes this precursor to the hydroxyphenyloxazoline ring system present in this class of siderophores. The sequence is that of Phenyloxazoline synthase MbtB (mbtB) from Mycobacterium sp. (strain MCS).